Consider the following 62-residue polypeptide: MKASDLKNMSVEELTAKNVELTKELFNLRFQLHTGRLENTAKISAVKKDIARVNTFLSERRG.

Belongs to the universal ribosomal protein uL29 family.

The sequence is that of Large ribosomal subunit protein uL29 from Geobacter metallireducens (strain ATCC 53774 / DSM 7210 / GS-15).